Here is a 683-residue protein sequence, read N- to C-terminus: FAD-binding monooxygenase ausC (683 aa).

An N-linked (GlcNAc...) asparagine glycan is attached at N5. The helical transmembrane segment at 111 to 131 (ILIIGAGFGGLLFAVRLIQTG) threads the bilayer. Residues 150-153 (TWYW), 162-163 (DT), and Y168 each bind FAD. 160–162 (MCD) contributes to the NADP(+) binding site. N286 carries N-linked (GlcNAc...) asparagine glycosylation. Residues 310-316 (TGASAVQ) and 333-334 (RT) each bind NADP(+). N-linked (GlcNAc...) asparagine glycans are attached at residues N525 and N572.

Belongs to the FAD-binding monooxygenase family. It depends on FAD as a cofactor.

It is found in the membrane. The enzyme catalyses preaustinoid A + AH2 + O2 = preaustinoid A1 + A + H2O. It functions in the pathway secondary metabolite biosynthesis; terpenoid biosynthesis. Functionally, FAD-binding monooxygenase; part of the gene cluster A that mediates the biosynthesis of austinol and dehydroaustinol, two fungal meroterpenoids. The first step of the pathway is the synthesis of 3,5-dimethylorsellinic acid by the polyketide synthase ausA. 3,5-dimethylorsellinic acid is then prenylated by the polyprenyl transferase ausN. Further epoxidation by the FAD-dependent monooxygenase ausM and cyclization by the probable terpene cyclase ausL lead to the formation of protoaustinoid A. Protoaustinoid A is then oxidized to spiro-lactone preaustinoid A3 by the combined action of the FAD-binding monooxygenases ausB and ausC, and the dioxygenase ausE. Acid-catalyzed keto-rearrangement and ring contraction of the tetraketide portion of preaustinoid A3 by ausJ lead to the formation of preaustinoid A4. The aldo-keto reductase ausK, with the help of ausH, is involved in the next step by transforming preaustinoid A4 into isoaustinone which is in turn hydroxylated by the P450 monooxygenase ausI to form austinolide. Finally, the cytochrome P450 monooxygenase ausG modifies austinolide to austinol. Austinol can be further modified to dehydroaustinol which forms a diffusible complex with diorcinol that initiates conidiation. Due to genetic rearrangements of the clusters and the subsequent loss of some enzymes, the end products of the Emericella nidulans austinoid biosynthesis clusters are austinol and dehydroaustinol, even if additional enzymes, such as the O-acetyltransferase ausQ and the cytochrome P450 monooxygenase ausR are still functional. The chain is FAD-binding monooxygenase ausC from Emericella nidulans (strain FGSC A4 / ATCC 38163 / CBS 112.46 / NRRL 194 / M139) (Aspergillus nidulans).